Reading from the N-terminus, the 317-residue chain is Pinoresinol reductase 1 (317 aa).

Residues T18, Y20, I21, R41, K50, S90, G91, R95, N98, S121, and E122 each contribute to the NADP(+) site. M125 serves as a coordination point for (-)-pinoresinol. NADP(+)-binding residues include K144 and F166. The active-site Proton acceptor is K144. M177 and V178 together coordinate (-)-pinoresinol.

The protein belongs to the NmrA-type oxidoreductase family. Isoflavone reductase subfamily. Forms homodimers. Expressed in roots and stems.

The enzyme catalyses (-)-lariciresinol + NADP(+) = (-)-pinoresinol + NADPH + H(+). It catalyses the reaction (+)-lariciresinol + NADP(+) = (+)-pinoresinol + NADPH + H(+). Reductase involved in lignan biosynthesis. Involved in secondary cell wall biosynthesis in fiber cells. Unlike conventional pinoresinol reductases that can reduce both pinoresinol and lariciresinol, PRR1 shows a strict substrate preference toward pinoresinol. Active on both (+) and (-)-pinoresinol. Abstracts the 4R-hydride from the NADPH cofactor during catalysis. The polypeptide is Pinoresinol reductase 1 (Arabidopsis thaliana (Mouse-ear cress)).